Consider the following 254-residue polypeptide: Alcohol dehydrogenase (254 aa).

Residue 10-33 participates in NAD(+) binding; the sequence is FVAGLGGIGLDTSRELVKRDLKNL. Serine 138 contributes to the substrate binding site. The active-site Proton acceptor is tyrosine 151.

Belongs to the short-chain dehydrogenases/reductases (SDR) family. As to quaternary structure, homodimer.

It catalyses the reaction a primary alcohol + NAD(+) = an aldehyde + NADH + H(+). It carries out the reaction a secondary alcohol + NAD(+) = a ketone + NADH + H(+). This chain is Alcohol dehydrogenase (Adh), found in Drosophila subobscura (Fruit fly).